The sequence spans 240 residues: Ribonuclease 3 (240 aa).

One can recognise an RNase III domain in the interval 9-141; it reads VEEFQKETGI…LLAAIYLDQG (133 aa). A Mg(2+)-binding site is contributed by Glu54. Asp58 is a catalytic residue. Asp127 and Glu130 together coordinate Mg(2+). Glu130 is an active-site residue. Positions 168-237 constitute a DRBM domain; the sequence is DYKTALQEIV…ARIAYEKLLK (70 aa).

Belongs to the ribonuclease III family. As to quaternary structure, homodimer. The cofactor is Mg(2+).

The protein resides in the cytoplasm. It catalyses the reaction Endonucleolytic cleavage to 5'-phosphomonoester.. In terms of biological role, digests double-stranded RNA. Involved in the processing of primary rRNA transcript to yield the immediate precursors to the large and small rRNAs (23S and 16S). Also processes some mRNAs, and tRNAs when they are encoded in the rRNA operon. Probably processes pre-crRNA and tracrRNA of type II CRISPR loci if present in the organism. The protein is Ribonuclease 3 (rnc) of Thermotoga maritima (strain ATCC 43589 / DSM 3109 / JCM 10099 / NBRC 100826 / MSB8).